A 429-amino-acid polypeptide reads, in one-letter code: GTPase Obg (429 aa).

Residues 1–158 (MFVDQVKIYV…RNVQLELKVL (158 aa)) form the Obg domain. A disordered region spans residues 124-145 (RGNKRFATPANPAPELSENGEP). Residues 159-329 (ADVGLVGFPS…LLLAIADKLE (171 aa)) form the OBG-type G domain. GTP-binding positions include 165–172 (GFPSVGKS), 190–194 (FTTIV), 212–215 (DLPG), 282–285 (NKMD), and 310–312 (SAV). Residues S172 and T192 each contribute to the Mg(2+) site. The OCT domain maps to 351–429 (KYVAEEPDFE…LLDYEFEFMD (79 aa)).

Belongs to the TRAFAC class OBG-HflX-like GTPase superfamily. OBG GTPase family. Monomer. It depends on Mg(2+) as a cofactor.

The protein localises to the cytoplasm. An essential GTPase which binds GTP, GDP and possibly (p)ppGpp with moderate affinity, with high nucleotide exchange rates and a fairly low GTP hydrolysis rate. Plays a role in control of the cell cycle, stress response, ribosome biogenesis and in those bacteria that undergo differentiation, in morphogenesis control. The sequence is that of GTPase Obg from Listeria innocua serovar 6a (strain ATCC BAA-680 / CLIP 11262).